The primary structure comprises 180 residues: Thebaine synthase 1 (180 aa).

Ser-96 is a thebaine binding site. The Proton acceptor role is filled by His-111. Thr-127 lines the thebaine pocket.

The protein belongs to the MLP family. Homodimer (allosteric) and oligomers. In terms of tissue distribution, expressed in poppy latex.

It carries out the reaction (7S)-O-acetylsalutaridinol = thebaine + acetate + H(+). It functions in the pathway alkaloid biosynthesis; morphine biosynthesis. Catalyzes the formation of thebaine from (7S)-salutaridinol 7-O-acetate at the expense of labile hydroxylated by-products, which are preferentially produced by spontaneous allylic elimination. The protein is Thebaine synthase 1 of Papaver somniferum (Opium poppy).